Consider the following 127-residue polypeptide: Small ribosomal subunit protein uS11 (127 aa).

The protein belongs to the universal ribosomal protein uS11 family. In terms of assembly, part of the 30S ribosomal subunit. Interacts with proteins S7 and S18. Binds to IF-3.

Functionally, located on the platform of the 30S subunit, it bridges several disparate RNA helices of the 16S rRNA. Forms part of the Shine-Dalgarno cleft in the 70S ribosome. This is Small ribosomal subunit protein uS11 from Streptococcus gordonii (strain Challis / ATCC 35105 / BCRC 15272 / CH1 / DL1 / V288).